A 253-amino-acid chain; its full sequence is MASLTKMHSKGLDFFYGDFQALHDISLEFSNNQVTALIGPSGCGKSTFLRCLNRMNDLIPISRVEGEICLDNDNIYDPQVDVVELRRRVGMVFQKPNPFPKSIYENVAYGLRVNGVKDKNCLEDKVEESLRHAALWDEVKDRLHDSALGLSGGQQQRLCIARALAVEPEVLLMDEPASALDPIATQKIEELIHTLKQKYTIIIVTHSMQQAARVSDVTAFFYMGRLIETGDTEVMFTRPGNKQTEDYITGRFG.

The ABC transporter domain maps to 7–248; it reads MHSKGLDFFY…PGNKQTEDYI (242 aa). 39 to 46 contributes to the ATP binding site; that stretch reads GPSGCGKS.

It belongs to the ABC transporter superfamily. Phosphate importer (TC 3.A.1.7) family. As to quaternary structure, the complex is composed of two ATP-binding proteins (PstB), two transmembrane proteins (PstC and PstA) and a solute-binding protein (PstS).

It is found in the cell inner membrane. It catalyses the reaction phosphate(out) + ATP + H2O = ADP + 2 phosphate(in) + H(+). Its function is as follows. Part of the ABC transporter complex PstSACB involved in phosphate import. Responsible for energy coupling to the transport system. This chain is Phosphate import ATP-binding protein PstB, found in Oleidesulfovibrio alaskensis (strain ATCC BAA-1058 / DSM 17464 / G20) (Desulfovibrio alaskensis).